A 519-amino-acid polypeptide reads, in one-letter code: Na(+)/H(+) exchange regulatory cofactor NHE-RF3 (519 aa).

Residues 9–90 (ECKLSKQEGQ…SVTLLVLDGD (82 aa)) enclose the PDZ 1 domain. Phosphoserine occurs at positions 108, 148, 192, 250, 334, and 348. PDZ domains are found at residues 134-215 (RLCY…VDKE) and 243-323 (IVEM…VDKE). The tract at residues 347 to 374 (GSVKEAPAPTPTSLEVSSPPDTTEEVDH) is disordered. Residues 357–367 (PTSLEVSSPPD) are compositionally biased toward polar residues. The PDZ 4 domain maps to 378 to 458 (LCRLAKGENG…NVTLLVCGKK (81 aa)). Phosphothreonine is present on T451. Residues 479-519 (DTPPDSKEGIVVESNHDSHMAKERAHSTASHSSSNSEDTEM) form a disordered region. The span at 482–504 (PDSKEGIVVESNHDSHMAKERAH) shows a compositional bias: basic and acidic residues. Phosphoserine is present on residues S492, S508, S510, S511, S512, and S514. Low complexity predominate over residues 505–519 (STASHSSSNSEDTEM).

This sequence belongs to the NHER family. In terms of assembly, interacts with PDZK1IP1 and ABCC2. Interacts (via PDZ domains 1 and 3) with SCARB1 (C-terminal domain). Forms a heterodimeric complex with NHERF1. Interacts with AKAP2, BCR, CFTR, SLC22A12, SLC22A4, SLC22A5, NHERF2 and SLC17A1. Component of a complex, composed of PDZK1, SYNGAP1, KLHL17 and NMDA receptors. Interacts (via PDZ1 domain) directly with KLHL17; the interaction is important for integrity of actin cytoskeleton structures in neurons. Interacts (via the first PDZ domain) with PTGIR (via non-isoprenylated C-terminus). Interacts (via C-terminal PDZ domain) with SLC26A6 (via C-terminal domain). Interacts (via C-terminal PDZ domain) with SLC9A3 (via C-terminal domain). Interacts (via PDZ domains 1 and 3) with SLC5A8 (via PDZ-binding motif); interaction increases nicotinate transport activity of SLC5A8. As to expression, expression is limited to epithelial cells. Expressed in the kidney (brush border of proximal tubule), pancreas, liver, and small intestine. Expressed at a lower level in the adrenal cortex, testis and stomach. Overexpressed in breast, renal and lung carcinomas.

Its subcellular location is the membrane. It localises to the cell membrane. Functionally, a scaffold protein that connects plasma membrane proteins and regulatory components, regulating their surface expression in epithelial cells apical domains. May be involved in the coordination of a diverse range of regulatory processes for ion transport and second messenger cascades. In complex with NHERF1, may cluster proteins that are functionally dependent in a mutual fashion and modulate the trafficking and the activity of the associated membrane proteins. May play a role in the cellular mechanisms associated with multidrug resistance through its interaction with ABCC2 and PDZK1IP1. May potentiate the CFTR chloride channel activity. Required for normal cell-surface expression of SCARB1. Plays a role in maintaining normal plasma cholesterol levels via its effects on SCARB1. Plays a role in the normal localization and function of the chloride-anion exchanger SLC26A6 to the plasma membrane in the brush border of the proximal tubule of the kidney. May be involved in the regulation of proximal tubular Na(+)-dependent inorganic phosphate cotransport therefore playing an important role in tubule function. This Homo sapiens (Human) protein is Na(+)/H(+) exchange regulatory cofactor NHE-RF3 (PDZK1).